Reading from the N-terminus, the 141-residue chain is MRRNQTPEGHSIRPLRVGEQIRHVLAEMLMRGEIHGDTLDNLFVSISEVRMTPDLRIATVFVKSLGGASDDTVIGILSKNASFLQAAIAKKIRLKYVPKLRFLADESFEQGSRIDSLLRSPHVQRDLQENDDQEDDSEGSL.

The tract at residues 120–141 (SPHVQRDLQENDDQEDDSEGSL) is disordered. The segment covering 129–141 (ENDDQEDDSEGSL) has biased composition (acidic residues).

The protein belongs to the RbfA family. Monomer. Binds 30S ribosomal subunits, but not 50S ribosomal subunits or 70S ribosomes.

The protein localises to the cytoplasm. Functionally, one of several proteins that assist in the late maturation steps of the functional core of the 30S ribosomal subunit. Associates with free 30S ribosomal subunits (but not with 30S subunits that are part of 70S ribosomes or polysomes). Required for efficient processing of 16S rRNA. May interact with the 5'-terminal helix region of 16S rRNA. The sequence is that of Ribosome-binding factor A from Zymomonas mobilis subsp. mobilis (strain ATCC 31821 / ZM4 / CP4).